A 207-amino-acid polypeptide reads, in one-letter code: Large ribosomal subunit protein bL25 (207 aa).

This sequence belongs to the bacterial ribosomal protein bL25 family. CTC subfamily. As to quaternary structure, part of the 50S ribosomal subunit; part of the 5S rRNA/L5/L18/L25 subcomplex. Contacts the 5S rRNA. Binds to the 5S rRNA independently of L5 and L18.

Functionally, this is one of the proteins that binds to the 5S RNA in the ribosome where it forms part of the central protuberance. The protein is Large ribosomal subunit protein bL25 of Brucella canis (strain ATCC 23365 / NCTC 10854 / RM-666).